We begin with the raw amino-acid sequence, 165 residues long: Large ribosomal subunit protein uL10 (165 aa).

Belongs to the universal ribosomal protein uL10 family. In terms of assembly, part of the ribosomal stalk of the 50S ribosomal subunit. The N-terminus interacts with L11 and the large rRNA to form the base of the stalk. The C-terminus forms an elongated spine to which L12 dimers bind in a sequential fashion forming a multimeric L10(L12)X complex.

Forms part of the ribosomal stalk, playing a central role in the interaction of the ribosome with GTP-bound translation factors. The chain is Large ribosomal subunit protein uL10 from Dechloromonas aromatica (strain RCB).